The sequence spans 195 residues: MNYLIFKVIYANANIVVGEHNFIGYQIRIPKDYELEINKFCKLYLYEYISIMPNKNLIIKDLYGFRTYNERLLFIDLISINSIGPKTAINILKYDIDTIIDAIATKNIDYLITIKGINQRNANLICDQLNYKYINKVNDKNNWAKELSIGLENLGYTKKDIEYAITKVKINSQQDIDISEIISSAIKEISLRHEN.

A domain I region spans residues 1-66 (MNYLIFKVIY…LIIKDLYGFR (66 aa)). The tract at residues 67 to 141 (TYNERLLFID…KYINKVNDKN (75 aa)) is domain II. Position 141 (N141) is a region of interest, flexible linker. A domain III region spans residues 141-195 (NNWAKELSIGLENLGYTKKDIEYAITKVKINSQQDIDISEIISSAIKEISLRHEN).

Belongs to the RuvA family. Homotetramer. Forms an RuvA(8)-RuvB(12)-Holliday junction (HJ) complex. HJ DNA is sandwiched between 2 RuvA tetramers; dsDNA enters through RuvA and exits via RuvB. An RuvB hexamer assembles on each DNA strand where it exits the tetramer. Each RuvB hexamer is contacted by two RuvA subunits (via domain III) on 2 adjacent RuvB subunits; this complex drives branch migration. In the full resolvosome a probable DNA-RuvA(4)-RuvB(12)-RuvC(2) complex forms which resolves the HJ.

It is found in the cytoplasm. The RuvA-RuvB-RuvC complex processes Holliday junction (HJ) DNA during genetic recombination and DNA repair, while the RuvA-RuvB complex plays an important role in the rescue of blocked DNA replication forks via replication fork reversal (RFR). RuvA specifically binds to HJ cruciform DNA, conferring on it an open structure. The RuvB hexamer acts as an ATP-dependent pump, pulling dsDNA into and through the RuvAB complex. HJ branch migration allows RuvC to scan DNA until it finds its consensus sequence, where it cleaves and resolves the cruciform DNA. The protein is Holliday junction branch migration complex subunit RuvA of Ureaplasma parvum serovar 3 (strain ATCC 27815 / 27 / NCTC 11736).